A 445-amino-acid polypeptide reads, in one-letter code: Phosphoglucosamine mutase (445 aa).

The active-site Phosphoserine intermediate is Ser-102. Mg(2+) contacts are provided by Ser-102, Asp-241, Asp-243, and Asp-245. The residue at position 102 (Ser-102) is a Phosphoserine.

It belongs to the phosphohexose mutase family. The cofactor is Mg(2+). Activated by phosphorylation.

It catalyses the reaction alpha-D-glucosamine 1-phosphate = D-glucosamine 6-phosphate. Its function is as follows. Catalyzes the conversion of glucosamine-6-phosphate to glucosamine-1-phosphate. The chain is Phosphoglucosamine mutase from Serratia proteamaculans (strain 568).